The following is a 114-amino-acid chain: Transmembrane protein 14B (114 aa).

The next 4 membrane-spanning stretches (helical) occupy residues leucine 8–valine 28, glycine 34–tyrosine 54, proline 60–methionine 80, and tyrosine 83–alanine 103.

The protein belongs to the TMEM14 family. In terms of assembly, interacts with IQGAP1; this interaction promotes phosphorylation and nuclear translocation of IQGAP1. Mainly expressed in the outer subventricular zone (OSVZ) of the fetal brains.

Its subcellular location is the membrane. Functionally, primate-specific protein involved in cortical expansion and folding in the developing neocortex. May drive neural progenitor proliferation through nuclear translocation of IQGAP1, which in turn promotes G1/S cell cycle transitions. In Homo sapiens (Human), this protein is Transmembrane protein 14B (TMEM14B).